The chain runs to 285 residues: MAAQIIDGKLIAQTVRQEVAARVKARVEAGLRAPGLAVVLVGQDPASQIYVSSKRKACEEVGFISQSFDLPANTKEIELLALINELNTNKEIDGILVQLPLPAGIDTTNILEHIDPEKDVDGFHPYNVGRLSQRIPKLRSCTPKGIITLLERYNIPVRGKHAVIVGASNIVGRPMTLEMLLAGATTTTCHRFTQDLEHHIRQADILVVAVGKPHFIPGDWIKEGATVIDVGINRLDSGKLAGDVEYDVAREKAKYITPVPGGVGPMTVATLIENTLLACEQYHSD.

NADP(+) contacts are provided by residues 166–168 (GAS) and I232.

Belongs to the tetrahydrofolate dehydrogenase/cyclohydrolase family. In terms of assembly, homodimer.

It catalyses the reaction (6R)-5,10-methylene-5,6,7,8-tetrahydrofolate + NADP(+) = (6R)-5,10-methenyltetrahydrofolate + NADPH. The enzyme catalyses (6R)-5,10-methenyltetrahydrofolate + H2O = (6R)-10-formyltetrahydrofolate + H(+). It functions in the pathway one-carbon metabolism; tetrahydrofolate interconversion. Its function is as follows. Catalyzes the oxidation of 5,10-methylenetetrahydrofolate to 5,10-methenyltetrahydrofolate and then the hydrolysis of 5,10-methenyltetrahydrofolate to 10-formyltetrahydrofolate. In Photobacterium profundum (strain SS9), this protein is Bifunctional protein FolD.